Here is a 218-residue protein sequence, read N- to C-terminus: Ribose-5-phosphate isomerase A (218 aa).

Residues 28-31, 81-84, and 94-97 each bind substrate; these read TGST, DGAD, and KGGG. The active-site Proton acceptor is Glu103. Lys121 contributes to the substrate binding site.

This sequence belongs to the ribose 5-phosphate isomerase family. In terms of assembly, homodimer.

It catalyses the reaction aldehydo-D-ribose 5-phosphate = D-ribulose 5-phosphate. It participates in carbohydrate degradation; pentose phosphate pathway; D-ribose 5-phosphate from D-ribulose 5-phosphate (non-oxidative stage): step 1/1. Its function is as follows. Catalyzes the reversible conversion of ribose-5-phosphate to ribulose 5-phosphate. In Shewanella piezotolerans (strain WP3 / JCM 13877), this protein is Ribose-5-phosphate isomerase A.